Reading from the N-terminus, the 165-residue chain is uncharacterized protein (165 aa).

This is an uncharacterized protein from Invertebrate iridescent virus 6 (IIV-6).